Here is a 396-residue protein sequence, read N- to C-terminus: Flavohemoprotein (396 aa).

Residues 1–136 (MLDTQTIAIV…LADVFIQRES (136 aa)) form the Globin domain. H85 serves as a coordination point for heme b. Active-site charge relay system residues include Y95 and E135. The reductase stretch occupies residues 147–396 (GGWRTLRRFR…YECFGPHKVI (250 aa)). An FAD-binding FR-type domain is found at 150–255 (RTLRRFRIIK…APPRGDFFLD (106 aa)). FAD is bound by residues Y188 and 204 to 207 (RQYS). Residue 268-273 (GVGQTP) participates in NADP(+) binding. 389 to 392 (CFGP) contacts FAD.

Belongs to the globin family. Two-domain flavohemoproteins subfamily. This sequence in the C-terminal section; belongs to the flavoprotein pyridine nucleotide cytochrome reductase family. Heme b is required as a cofactor. Requires FAD as cofactor.

The enzyme catalyses 2 nitric oxide + NADPH + 2 O2 = 2 nitrate + NADP(+) + H(+). The catalysed reaction is 2 nitric oxide + NADH + 2 O2 = 2 nitrate + NAD(+) + H(+). In terms of biological role, is involved in NO detoxification in an aerobic process, termed nitric oxide dioxygenase (NOD) reaction that utilizes O(2) and NAD(P)H to convert NO to nitrate, which protects the bacterium from various noxious nitrogen compounds. Therefore, plays a central role in the inducible response to nitrosative stress. The chain is Flavohemoprotein from Yersinia pestis.